The following is a 174-amino-acid chain: Adenine phosphoribosyltransferase (174 aa).

The protein belongs to the purine/pyrimidine phosphoribosyltransferase family. In terms of assembly, homodimer.

Its subcellular location is the cytoplasm. It catalyses the reaction AMP + diphosphate = 5-phospho-alpha-D-ribose 1-diphosphate + adenine. The protein operates within purine metabolism; AMP biosynthesis via salvage pathway; AMP from adenine: step 1/1. Functionally, catalyzes a salvage reaction resulting in the formation of AMP, that is energically less costly than de novo synthesis. The polypeptide is Adenine phosphoribosyltransferase (Agathobacter rectalis (strain ATCC 33656 / DSM 3377 / JCM 17463 / KCTC 5835 / VPI 0990) (Eubacterium rectale)).